The chain runs to 528 residues: Glucose transporter 1E (528 aa).

The disordered stretch occupies residues 1–22 (MTERRDNVSHAPDAIEGPNDGA). Residues 1–43 (MTERRDNVSHAPDAIEGPNDGAHAEETSPGFFSFENLGVAQVQ) lie on the Cytoplasmic side of the membrane. The helical transmembrane segment at 44 to 64 (VVGGTLNGYVIGYVAVYLLLY) threads the bilayer. At 65–118 (LTATECKFTTEGACGGRKIYGCKWSGTTCKFENPKCSEGSDPSDSCKNEVAYTS) the chain is on the extracellular side. A helical membrane pass occupies residues 119–139 (VYSGIFACAMIVGSMVGSIIA). Residues 140-151 (GKCITTFGLKKS) are Cytoplasmic-facing. A helical transmembrane segment spans residues 152–172 (FIIVSITCTIACVVVQVAIEY). The Extracellular segment spans residues 173–175 (NNY). The chain crosses the membrane as a helical span at residues 176-196 (YALCTGRVLIGLGVGILCSVF). Residues 197-213 (PMYVNENAHPKLCKMDG) are Cytoplasmic-facing. Residues 214–234 (VLFQVFTTLGIMLAAMLGLIL) form a helical membrane-spanning segment. Residues 235 to 250 (DKTGASKEEANMAGRL) are Extracellular-facing. Residues 251–271 (HVFSAVPLGLSVAMFLVGMFL) form a helical membrane-spanning segment. Residues 272–301 (RESTATFAQDDDGKADGGMDPNEYGWGQML) lie on the Cytoplasmic side of the membrane. Residues 302-322 (WPLFMGAVTAGTLQLTGINAV) form a helical membrane-spanning segment. At 323–338 (MNYAPKITENLGMDPS) the chain is on the extracellular side. The chain crosses the membrane as a helical span at residues 339-359 (LGNFLVMAWNFVTSLVAIPLA). Residues 360–367 (SRFTMRQM) lie on the Cytoplasmic side of the membrane. Residues 368 to 388 (FITCSFVASCMCLFLCGIPVF) traverse the membrane as a helical segment. The Extracellular segment spans residues 389–403 (PGVAEEKVKNGVATT). Residues 404–424 (GIALFIAAFEFGVGSCFFVLA) form a helical membrane-spanning segment. Topologically, residues 425–438 (QDLFPPSFRPKGSS) are cytoplasmic. Residues 439-459 (FVVMMQFIFNILINLLYPITT) traverse the membrane as a helical segment. Residues 460–475 (EAISGGATGDQDKGQA) are Extracellular-facing. A helical transmembrane segment spans residues 476 to 496 (VVFILFGLIGLICFVLQFFYL). Over 497-528 (YPYDANQDHENDHGTEPVERILSPVDVPTPRN) the chain is Cytoplasmic. Residues 507–528 (NDHGTEPVERILSPVDVPTPRN) form a disordered region.

This sequence belongs to the major facilitator superfamily. Sugar transporter (TC 2.A.1.1) family.

It is found in the membrane. Facilitative glucose transporter. The chain is Glucose transporter 1E (THT1E) from Trypanosoma brucei brucei.